The sequence spans 635 residues: ATP-dependent zinc metalloprotease FtsH (635 aa).

Over 1-6 (MNNQGR) the chain is Cytoplasmic. A helical transmembrane segment spans residues 7 to 27 (SILTWAALFVFVILLFNVFQS). Residues 28–103 (DGLLGGRNNI…VVPLETRMNT (76 aa)) lie on the Periplasmic side of the membrane. A helical membrane pass occupies residues 104–124 (FLGFLISWFPMLLLIGVWVFF). The Cytoplasmic portion of the chain corresponds to 125–635 (MRQMHGGGKA…KKAKKESTNI (511 aa)). 195–202 (GPPGTGKT) contacts ATP. H417 serves as a coordination point for Zn(2+). E418 is an active-site residue. Residues H421 and D495 each coordinate Zn(2+). The interval 600–635 (SEEENKFPFNDSPTIKIDKEKSPEKAKKAKKESTNI) is disordered. Over residues 615–635 (KIDKEKSPEKAKKAKKESTNI) the composition is skewed to basic and acidic residues.

In the central section; belongs to the AAA ATPase family. It in the C-terminal section; belongs to the peptidase M41 family. In terms of assembly, homohexamer. Zn(2+) is required as a cofactor.

It is found in the cell inner membrane. In terms of biological role, acts as a processive, ATP-dependent zinc metallopeptidase for both cytoplasmic and membrane proteins. Plays a role in the quality control of integral membrane proteins. In Rickettsia felis (strain ATCC VR-1525 / URRWXCal2) (Rickettsia azadi), this protein is ATP-dependent zinc metalloprotease FtsH.